An 81-amino-acid polypeptide reads, in one-letter code: MAVRIRLTRLGRKKMPFYRLVVADSEAKRDGKFLDIVGTYDPMQDPAVITINDEKLQDWVGRGALPTTTVKSLLKKAAANK.

The protein belongs to the bacterial ribosomal protein bS16 family.

The protein is Small ribosomal subunit protein bS16 of Desulfotalea psychrophila (strain LSv54 / DSM 12343).